The primary structure comprises 162 residues: Globin CTT-VI (162 aa).

The N-terminal stretch at 1–15 is a signal peptide; it reads MKFLVLALCIAAASA. Residues 17 to 161 form the Globin domain; the sequence is VLTTEQADLV…TYAMLFSAMD (145 aa). Heme b is bound by residues His-75 and His-110.

It belongs to the globin family. As to quaternary structure, homodimer.

The chain is Globin CTT-VI (CTT-6) from Chironomus thummi thummi (Midge).